A 157-amino-acid polypeptide reads, in one-letter code: UPF0127 protein TK1120 (157 aa).

This sequence belongs to the UPF0127 family.

This Thermococcus kodakarensis (strain ATCC BAA-918 / JCM 12380 / KOD1) (Pyrococcus kodakaraensis (strain KOD1)) protein is UPF0127 protein TK1120.